Consider the following 296-residue polypeptide: Ribosomal protein L11 methyltransferase (296 aa).

S-adenosyl-L-methionine is bound by residues threonine 139, glycine 163, aspartate 185, and asparagine 232.

This sequence belongs to the methyltransferase superfamily. PrmA family.

The protein localises to the cytoplasm. It carries out the reaction L-lysyl-[protein] + 3 S-adenosyl-L-methionine = N(6),N(6),N(6)-trimethyl-L-lysyl-[protein] + 3 S-adenosyl-L-homocysteine + 3 H(+). Its function is as follows. Methylates ribosomal protein L11. The protein is Ribosomal protein L11 methyltransferase of Rippkaea orientalis (strain PCC 8801 / RF-1) (Cyanothece sp. (strain PCC 8801)).